The primary structure comprises 115 residues: Sericin-1 (115 aa).

The segment at 1–115 (GSSGSSGSSG…GGSSSTSSSN (115 aa)) is disordered.

As to expression, produced exclusively in the middle (MSG) section of silk glands.

The protein resides in the secreted. Provides the silk fibroin thread with a sticky coating. Acts as a cement by sticking silk threads together. The protein is Sericin-1 (SER1) of Galleria mellonella (Greater wax moth).